The sequence spans 66 residues: MRIFSLIVAGLVLLIQLHPAKGTLYRRFLCKKMKGRCETACLSFEKKIGTCRADLTPLCCKEKKKH.

The first 22 residues, 1-22, serve as a signal peptide directing secretion; that stretch reads MRIFSLIVAGLVLLIQLHPAKG. Cystine bridges form between C30-C59, C37-C51, and C41-C60.

It belongs to the beta-defensin family.

Its subcellular location is the secreted. Has antibacterial activity. The protein is Beta-defensin 13 (Defb13) of Rattus norvegicus (Rat).